Here is a 120-residue protein sequence, read N- to C-terminus: Ribonuclease P protein component (120 aa).

Belongs to the RnpA family. Consists of a catalytic RNA component (M1 or rnpB) and a protein subunit.

It carries out the reaction Endonucleolytic cleavage of RNA, removing 5'-extranucleotides from tRNA precursor.. Its function is as follows. RNaseP catalyzes the removal of the 5'-leader sequence from pre-tRNA to produce the mature 5'-terminus. It can also cleave other RNA substrates such as 4.5S RNA. The protein component plays an auxiliary but essential role in vivo by binding to the 5'-leader sequence and broadening the substrate specificity of the ribozyme. The sequence is that of Ribonuclease P protein component from Pseudoalteromonas atlantica (strain T6c / ATCC BAA-1087).